We begin with the raw amino-acid sequence, 177 residues long: ATP synthase subunit delta (177 aa).

The protein belongs to the ATPase delta chain family. As to quaternary structure, F-type ATPases have 2 components, F(1) - the catalytic core - and F(0) - the membrane proton channel. F(1) has five subunits: alpha(3), beta(3), gamma(1), delta(1), epsilon(1). F(0) has three main subunits: a(1), b(2) and c(10-14). The alpha and beta chains form an alternating ring which encloses part of the gamma chain. F(1) is attached to F(0) by a central stalk formed by the gamma and epsilon chains, while a peripheral stalk is formed by the delta and b chains.

The protein resides in the cell inner membrane. F(1)F(0) ATP synthase produces ATP from ADP in the presence of a proton or sodium gradient. F-type ATPases consist of two structural domains, F(1) containing the extramembraneous catalytic core and F(0) containing the membrane proton channel, linked together by a central stalk and a peripheral stalk. During catalysis, ATP synthesis in the catalytic domain of F(1) is coupled via a rotary mechanism of the central stalk subunits to proton translocation. In terms of biological role, this protein is part of the stalk that links CF(0) to CF(1). It either transmits conformational changes from CF(0) to CF(1) or is implicated in proton conduction. The polypeptide is ATP synthase subunit delta (Colwellia psychrerythraea (strain 34H / ATCC BAA-681) (Vibrio psychroerythus)).